A 279-amino-acid polypeptide reads, in one-letter code: Bifunctional protein FolD (279 aa).

NADP(+) contacts are provided by residues 158–160 (GRS), S183, and I224.

It belongs to the tetrahydrofolate dehydrogenase/cyclohydrolase family. Homodimer.

It catalyses the reaction (6R)-5,10-methylene-5,6,7,8-tetrahydrofolate + NADP(+) = (6R)-5,10-methenyltetrahydrofolate + NADPH. The catalysed reaction is (6R)-5,10-methenyltetrahydrofolate + H2O = (6R)-10-formyltetrahydrofolate + H(+). It functions in the pathway one-carbon metabolism; tetrahydrofolate interconversion. Catalyzes the oxidation of 5,10-methylenetetrahydrofolate to 5,10-methenyltetrahydrofolate and then the hydrolysis of 5,10-methenyltetrahydrofolate to 10-formyltetrahydrofolate. In Caldicellulosiruptor saccharolyticus (strain ATCC 43494 / DSM 8903 / Tp8T 6331), this protein is Bifunctional protein FolD.